Reading from the N-terminus, the 66-residue chain is Large ribosomal subunit protein bL35 (66 aa).

A disordered region spans residues Met-1–Gly-22.

Belongs to the bacterial ribosomal protein bL35 family.

The chain is Large ribosomal subunit protein bL35 from Pseudoalteromonas translucida (strain TAC 125).